The following is a 283-amino-acid chain: Quinate/shikimate dehydrogenase (NAD(+)) (283 aa).

Serine 17, threonine 69, lysine 73, asparagine 94, and aspartate 110 together coordinate shikimate. L-quinate is bound by residues serine 17–threonine 19, threonine 69, lysine 73, asparagine 94, and aspartate 110. Lysine 73 (proton acceptor) is an active-site residue. NAD(+) contacts are provided by residues glycine 137–valine 138, aspartate 158, arginine 163, proline 203–methionine 206, alanine 213, valine 228, and glycine 251. Glutamine 258 serves as a coordination point for shikimate. Glutamine 258 is an L-quinate binding site.

Belongs to the shikimate dehydrogenase family. As to quaternary structure, homodimer.

It carries out the reaction L-quinate + NAD(+) = 3-dehydroquinate + NADH + H(+). It catalyses the reaction shikimate + NAD(+) = 3-dehydroshikimate + NADH + H(+). It participates in metabolic intermediate biosynthesis; chorismate biosynthesis; chorismate from D-erythrose 4-phosphate and phosphoenolpyruvate: step 4/7. It functions in the pathway aromatic compound metabolism; 3,4-dihydroxybenzoate biosynthesis; 3-dehydroquinate from D-quinate (NAD(+) route). In terms of biological role, involved in the biosynthesis of the chorismate, which leads to the biosynthesis of aromatic amino acids, and plays a key role in the quinate degradation pathway. Catalyzes the NAD(+)-dependent oxidation of both quinate and shikimate to 3-dehydroquinate and 3-dehydroshikimate, respectively. It can only use NAD. This is Quinate/shikimate dehydrogenase (NAD(+)) from Corynebacterium glutamicum (strain ATCC 13032 / DSM 20300 / JCM 1318 / BCRC 11384 / CCUG 27702 / LMG 3730 / NBRC 12168 / NCIMB 10025 / NRRL B-2784 / 534).